A 54-amino-acid chain; its full sequence is U1-ctenitoxin-Pr1a (54 aa).

5 cysteine pairs are disulfide-bonded: cysteine 2–cysteine 19, cysteine 9–cysteine 25, cysteine 16–cysteine 51, cysteine 18–cysteine 39, and cysteine 27–cysteine 37.

In terms of tissue distribution, expressed by the venom gland.

The protein localises to the secreted. Functionally, omega-agatoxins are antagonists of voltage-gated calcium channels (Cav). Causes rapid general flaccid paralysis followed by death in 10-30 minutes when injected in mice at dose levels of 5 ug per mouse. The chain is U1-ctenitoxin-Pr1a from Phoneutria reidyi (Brazilian Amazonian armed spider).